A 154-amino-acid chain; its full sequence is Protein X (154 aa).

The mitochondrial targeting sequence stretch occupies residues 68 to 117; it reads PCALRFTSARRMETTVNAPWSLPTVLHKRTIGLSGRSMTWIEEYIKDCVF.

The protein belongs to the orthohepadnavirus protein X family. As to quaternary structure, may form homodimer. May interact with host CEBPA, CFLAR, CREB1, DDB1, E4F1, HBXIP, HSPD1/HSP60, NFKBIA, POLR2E and SMAD4. Interacts with host SMC5-SMC6 complex and induces its degradation. Interacts with host TRPC4AP; leading to prevent ubiquitination of TRPC4AP. Interacts with host PLSCR1; this interaction promotes ubiquitination and degradation of HBx and impairs HBx-mediated cell proliferation. Post-translationally, a fraction may be phosphorylated in insect cells and HepG2 cells, a human hepatoblastoma cell line. Phosphorylated in vitro by host protein kinase C or mitogen-activated protein kinase. N-acetylated in insect cells.

It is found in the host cytoplasm. The protein localises to the host nucleus. It localises to the host mitochondrion. In terms of biological role, multifunctional protein that plays a role in silencing host antiviral defenses and promoting viral transcription. Does not seem to be essential for HBV infection. May be directly involved in development of cirrhosis and liver cancer (hepatocellular carcinoma). Most of cytosolic activities involve modulation of cytosolic calcium. The effect on apoptosis is controversial depending on the cell types in which the studies have been conducted. May induce apoptosis by localizing in mitochondria and causing loss of mitochondrial membrane potential. May also modulate apoptosis by binding host CFLAR, a key regulator of the death-inducing signaling complex (DISC). Promotes viral transcription by using the host E3 ubiquitin ligase DDB1 to target the SMC5-SMC6 complex to proteasomal degradation. This host complex would otherwise bind to viral episomal DNA, and prevents its transcription. Moderately stimulates transcription of many different viral and cellular transcription elements. Promoters and enhancers stimulated by HBx contain DNA binding sites for NF-kappa-B, AP-1, AP-2, c-EBP, ATF/CREB, or the calcium-activated factor NF-AT. The protein is Protein X of Homo sapiens (Human).